We begin with the raw amino-acid sequence, 290 residues long: Thioredoxin-like protein 1 (290 aa).

The region spanning 24–104 is the Thioredoxin domain; sequence VDCYADWCGP…PQALKEKVAL (81 aa). A disulfide bond links Cys-31 and Cys-34. The PITH domain maps to 118 to 290; sequence SSSAPVKGFA…SKGKLQKVEA (173 aa).

The protein localises to the cytoplasm. The protein resides in the nucleus. Has a role in cellular detoxification of alkyl hydroperoxide. This Schizosaccharomyces pombe (strain 972 / ATCC 24843) (Fission yeast) protein is Thioredoxin-like protein 1 (txl1).